The following is a 124-amino-acid chain: Small ribosomal subunit protein uS11 (124 aa).

This sequence belongs to the universal ribosomal protein uS11 family. As to quaternary structure, part of the 30S ribosomal subunit. Interacts with proteins S7 and S18. Binds to IF-3.

Functionally, located on the platform of the 30S subunit, it bridges several disparate RNA helices of the 16S rRNA. Forms part of the Shine-Dalgarno cleft in the 70S ribosome. The polypeptide is Small ribosomal subunit protein uS11 (Anaplasma marginale (strain St. Maries)).